We begin with the raw amino-acid sequence, 306 residues long: Ribonuclease Z (306 aa).

Zn(2+)-binding residues include His63, His65, Asp67, His68, His141, Asp211, and His269. Asp67 functions as the Proton acceptor in the catalytic mechanism.

It belongs to the RNase Z family. In terms of assembly, homodimer. It depends on Zn(2+) as a cofactor.

It catalyses the reaction Endonucleolytic cleavage of RNA, removing extra 3' nucleotides from tRNA precursor, generating 3' termini of tRNAs. A 3'-hydroxy group is left at the tRNA terminus and a 5'-phosphoryl group is left at the trailer molecule.. Its function is as follows. Zinc phosphodiesterase, which displays some tRNA 3'-processing endonuclease activity. Probably involved in tRNA maturation, by removing a 3'-trailer from precursor tRNA. The sequence is that of Ribonuclease Z from Staphylococcus aureus (strain MSSA476).